The sequence spans 162 residues: D-aminoacyl-tRNA deacylase (162 aa).

The Gly-cisPro motif, important for rejection of L-amino acids motif lies at 145–146 (GP).

The protein belongs to the DTD family. As to quaternary structure, homodimer.

It localises to the cytoplasm. The enzyme catalyses glycyl-tRNA(Ala) + H2O = tRNA(Ala) + glycine + H(+). It carries out the reaction a D-aminoacyl-tRNA + H2O = a tRNA + a D-alpha-amino acid + H(+). In terms of biological role, an aminoacyl-tRNA editing enzyme that deacylates mischarged D-aminoacyl-tRNAs. Also deacylates mischarged glycyl-tRNA(Ala), protecting cells against glycine mischarging by AlaRS. Acts via tRNA-based rather than protein-based catalysis; rejects L-amino acids rather than detecting D-amino acids in the active site. By recycling D-aminoacyl-tRNA to D-amino acids and free tRNA molecules, this enzyme counteracts the toxicity associated with the formation of D-aminoacyl-tRNA entities in vivo and helps enforce protein L-homochirality. This Bifidobacterium longum (strain NCC 2705) protein is D-aminoacyl-tRNA deacylase.